Consider the following 337-residue polypeptide: Beta-glucosidase-like protein NCA3, mitochondrial (337 aa).

The segment covering 57–67 has biased composition (low complexity); the sequence is ESAATTTTLSS. Residues 57-84 form a disordered region; the sequence is ESAATTTTLSSSEKDTSEQKRDGGFQDG. A compositionally biased stretch (basic and acidic residues) spans 68–80; the sequence is SEKDTSEQKRDGG.

It belongs to the SUN family.

It localises to the mitochondrion. Involved in the mitochondrial expression of subunits 6 and 8 of the F0-F1 ATP synthase. The polypeptide is Beta-glucosidase-like protein NCA3, mitochondrial (NCA3) (Saccharomyces cerevisiae (strain ATCC 204508 / S288c) (Baker's yeast)).